A 158-amino-acid chain; its full sequence is MQIQIVCVGKIKDAYISSGVVEFEKRLRPYGKIFITELAEVKIPDNASASDELRVKEREGELILANVKEGFFKIALDPNGMSLSSEEFSDVFRDAKLSGKNLCFIIGGPLGLSPKLLQSVEKKLSLSRMTFTHPMTRLILLEQVYRAFRILNGEPYHK.

Residues L76, G107, and 126–131 (LSRMTF) contribute to the S-adenosyl-L-methionine site.

This sequence belongs to the RNA methyltransferase RlmH family.

It is found in the cytoplasm. The catalysed reaction is pseudouridine(1915) in 23S rRNA + S-adenosyl-L-methionine = N(3)-methylpseudouridine(1915) in 23S rRNA + S-adenosyl-L-homocysteine + H(+). Functionally, specifically methylates the pseudouridine at position 1915 (m3Psi1915) in 23S rRNA. The protein is Putative ribosomal RNA large subunit methyltransferase H of Methanocorpusculum labreanum (strain ATCC 43576 / DSM 4855 / Z).